A 121-amino-acid polypeptide reads, in one-letter code: Fluoride-specific ion channel FluC 2 (121 aa).

Transmembrane regions (helical) follow at residues 3-23 (YLFV…LSTL), 27-47 (SGLP…MGYL), 64-84 (GVTT…FELV), and 92-112 (IALL…FCWF). Na(+) is bound by residues G71 and T74.

The protein belongs to the fluoride channel Fluc/FEX (TC 1.A.43) family.

The protein resides in the cell membrane. The catalysed reaction is fluoride(in) = fluoride(out). Its activity is regulated as follows. Na(+) is not transported, but it plays an essential structural role and its presence is essential for fluoride channel function. Its function is as follows. Fluoride-specific ion channel. Important for reducing fluoride concentration in the cell, thus reducing its toxicity. This is Fluoride-specific ion channel FluC 2 from Staphylococcus haemolyticus (strain JCSC1435).